Reading from the N-terminus, the 156-residue chain is NADH-ubiquinone oxidoreductase 20 kDa subunit (156 aa).

[4Fe-4S] cluster-binding residues include Cys33, Cys34, Cys98, and Cys128.

This sequence belongs to the complex I 20 kDa subunit family. The cofactor is [4Fe-4S] cluster.

The protein localises to the mitochondrion. The catalysed reaction is a ubiquinone + NADH + 5 H(+)(in) = a ubiquinol + NAD(+) + 4 H(+)(out). The protein is NADH-ubiquinone oxidoreductase 20 kDa subunit (NAD10) of Paramecium tetraurelia.